Reading from the N-terminus, the 111-residue chain is Nucleoid-associated protein glr3498 (111 aa).

This sequence belongs to the YbaB/EbfC family. In terms of assembly, homodimer.

Its subcellular location is the cytoplasm. It is found in the nucleoid. Binds to DNA and alters its conformation. May be involved in regulation of gene expression, nucleoid organization and DNA protection. This Gloeobacter violaceus (strain ATCC 29082 / PCC 7421) protein is Nucleoid-associated protein glr3498.